Here is a 443-residue protein sequence, read N- to C-terminus: Monooxygenase asqM (443 aa).

The protein belongs to the aromatic-ring hydroxylase family. It depends on FAD as a cofactor.

It functions in the pathway secondary metabolite biosynthesis. It participates in alkaloid biosynthesis. Its pathway is mycotoxin biosynthesis. Its function is as follows. Monooxygenase; part of the gene cluster that mediates the biosynthesis of the aspoquinolone mycotoxins. The role of asqM within the aspoquinolone pathway has still to be determined. The first step of the pathway is catalyzed by the nonribosomal peptide synthetase asqK that condenses anthranilic acid and O-methyl-L-tyrosine to produce 4'-methoxycyclopeptin. 4'-methoxycyclopeptin is then converted to 4'-methoxydehydrocyclopeptin by the ketoglutarate-dependent dioxygenase asqJ. AsqJ also converts its first product 4'-methoxydehydrocyclopeptin to 4'-methoxycyclopenin. The following conversion of 4'-methoxycyclopenin into 4'-methoxyviridicatin is catalyzed by the cyclopenase asqI. 4'-methoxyviridicatin is the precursor of quinolone natural products, and is further converted to quinolinone B. The prenyltransferase asqH1 then catalyzes the canonical Friedel-Crafts alkylation of quinolinone B with dimethylallyl cation to yield dimethylallyl quinolone, which is subjected to FAD-dependent dehydrogenation by the FAD-linked oxidoreductase asqF to yield conjugated aryl diene. The delta(3') double bond then serves as the site of the second alkylation with DMAPP catalyzed by the prenyltransferase asqH2 to yield a carbenium ion intermediate, which can be attacked by H(2)O to yield a styrenyl quinolone containing a C3'-hydroxyprenyl chain. The FAD-dependent monooxygenase asqG performs epoxidation of the terminal C7'-C8' olefin. Finally, after dehydratation of the epoxide at C3 by asqC, the quinolone epoxide rearrangement protein asqO catalyzes an enzymatic 3-exo-tet cyclization to yield the cyclopropyl-THF ring system in aspoquinolone. The chain is Monooxygenase asqM from Emericella nidulans (strain FGSC A4 / ATCC 38163 / CBS 112.46 / NRRL 194 / M139) (Aspergillus nidulans).